The primary structure comprises 665 residues: Cysteine-rich receptor-like protein kinase 26 (665 aa).

A signal peptide spans 1–22 (MLSLLLPLISLLFQIQCFTVKS). Residues 23-283 (QPVPLNQICS…GDKNRGVPKA (261 aa)) are Extracellular-facing. 2 Gnk2-homologous domains span residues 26–129 (PLNQ…NRTI) and 135–244 (ISPH…PWRF). 6 N-linked (GlcNAc...) asparagine glycosylation sites follow: Asn33, Asn37, Asn67, Asn126, Asn146, and Asn266. The tract at residues 251 to 275 (DDPSSVPATPSRPPKNETRSVTQGD) is disordered. The chain crosses the membrane as a helical span at residues 284–304 (LIFASASVAIVVLFIVLLVVF). Residues 305–665 (LKLRRKENIR…YNSNTELYPR (361 aa)) are Cytoplasmic-facing. In terms of domain architecture, Protein kinase spans 344-624 (FSLENKLGEG…VLMLDGHTIA (281 aa)). ATP-binding positions include 350 to 358 (LGEGGFGAV) and Lys372. Phosphotyrosine is present on Tyr417. Asp469 serves as the catalytic Proton acceptor. A Phosphoserine modification is found at Ser473. Thr510 carries the phosphothreonine modification. Tyr518 carries the post-translational modification Phosphotyrosine. Residues 641–665 (SDSSSSLGHNAKTSNYNSNTELYPR) form a disordered region. A compositionally biased stretch (polar residues) spans 647–665 (LGHNAKTSNYNSNTELYPR).

It belongs to the protein kinase superfamily. Ser/Thr protein kinase family. CRK subfamily.

It is found in the membrane. It carries out the reaction L-seryl-[protein] + ATP = O-phospho-L-seryl-[protein] + ADP + H(+). The enzyme catalyses L-threonyl-[protein] + ATP = O-phospho-L-threonyl-[protein] + ADP + H(+). This Arabidopsis thaliana (Mouse-ear cress) protein is Cysteine-rich receptor-like protein kinase 26 (CRK26).